Here is a 401-residue protein sequence, read N- to C-terminus: S-adenosylmethionine synthase (401 aa).

137 to 142 contacts ATP; sequence GQGSGD.

The protein belongs to the AdoMet synthase 2 family. Requires Mg(2+) as cofactor.

It catalyses the reaction L-methionine + ATP + H2O = S-adenosyl-L-methionine + phosphate + diphosphate. Its pathway is amino-acid biosynthesis; S-adenosyl-L-methionine biosynthesis; S-adenosyl-L-methionine from L-methionine: step 1/1. In terms of biological role, catalyzes the formation of S-adenosylmethionine from methionine and ATP. The sequence is that of S-adenosylmethionine synthase from Haloquadratum walsbyi (strain DSM 16790 / HBSQ001).